A 525-amino-acid polypeptide reads, in one-letter code: Transcriptional regulatory protein TOD6 (525 aa).

The tract at residues 22 to 82 (GFSILSKHPH…NNPSSWDPSD (61 aa)) is disordered. The segment covering 35–47 (LVHSHSLSHTNAK) has biased composition (polar residues). The span at 61–71 (STNKEEAESLK) shows a compositional bias: basic and acidic residues. One can recognise an HTH myb-type domain in the interval 67–124 (AESLKKNNPSSWDPSDDIKLRHLKEIKNLGWKEIAHHFPNRTPNACQFRWRRLKSGNL). Residues 97-120 (WKEIAHHFPNRTPNACQFRWRRLK) constitute a DNA-binding region (H-T-H motif). The residue at position 280 (S280) is a Phosphoserine. Residues 283-308 (PSTQIPHSTTKTRKNSHSVISSRRSS) form a disordered region. The segment covering 299–308 (HSVISSRRSS) has biased composition (low complexity). Residues S333, S341, and S366 each carry the phosphoserine modification. The interval 451–510 (TNEGCKDEEEEDDIDPLHKENGINTPSQQSQNYGMLEAKHDNPKSSELSSMTSANDIRNE) is disordered. 2 stretches are compositionally biased toward polar residues: residues 472–483 (GINTPSQQSQNY) and 495–506 (SSELSSMTSAND).

Belongs to the DOT6 family. Component of the RPD3C(L) complex composed of at least ASH1, CTI6, DEP1, DOT6, PHO23, RPD3, RXT2, RXT3, SAP30, SDS3, SIN3, TOD6; UME1 and UME6.

It is found in the cytoplasm. It localises to the nucleus. In terms of biological role, component of the RPD3 histone deacetylase complex RPD3C(L) responsible for the deacetylation of lysine residues on the N-terminal part of the core histones (H2A, H2B, H3 and H4). Histone deacetylation gives a tag for epigenetic repression and plays an important role in transcriptional regulation, cell cycle progression and developmental events. TOD6 binds to sequences containing the core CGATG, which resembles the PAC (Polymerase A and C) motif. The polypeptide is Transcriptional regulatory protein TOD6 (TOD6) (Saccharomyces cerevisiae (strain ATCC 204508 / S288c) (Baker's yeast)).